We begin with the raw amino-acid sequence, 356 residues long: Phenylalanine--tRNA ligase alpha subunit (356 aa).

Glutamate 258 provides a ligand contact to Mg(2+).

It belongs to the class-II aminoacyl-tRNA synthetase family. Phe-tRNA synthetase alpha subunit type 1 subfamily. Tetramer of two alpha and two beta subunits. Mg(2+) serves as cofactor.

Its subcellular location is the cytoplasm. The enzyme catalyses tRNA(Phe) + L-phenylalanine + ATP = L-phenylalanyl-tRNA(Phe) + AMP + diphosphate + H(+). This chain is Phenylalanine--tRNA ligase alpha subunit, found in Macrococcus caseolyticus (strain JCSC5402) (Macrococcoides caseolyticum).